A 311-amino-acid chain; its full sequence is Porphobilinogen deaminase (311 aa).

Residue Cys-243 is modified to S-(dipyrrolylmethanemethyl)cysteine.

This sequence belongs to the HMBS family. In terms of assembly, monomer. Dipyrromethane serves as cofactor.

The catalysed reaction is 4 porphobilinogen + H2O = hydroxymethylbilane + 4 NH4(+). The protein operates within porphyrin-containing compound metabolism; protoporphyrin-IX biosynthesis; coproporphyrinogen-III from 5-aminolevulinate: step 2/4. Tetrapolymerization of the monopyrrole PBG into the hydroxymethylbilane pre-uroporphyrinogen in several discrete steps. The protein is Porphobilinogen deaminase of Aliivibrio salmonicida (strain LFI1238) (Vibrio salmonicida (strain LFI1238)).